The following is a 162-amino-acid chain: 2-C-methyl-D-erythritol 2,4-cyclodiphosphate synthase (162 aa).

The a divalent metal cation site is built by D8 and H10. 4-CDP-2-C-methyl-D-erythritol 2-phosphate is bound by residues 8–10 (DVH) and 36–37 (HS). Position 44 (H44) interacts with a divalent metal cation. Residues 58 to 60 (DIG), 63 to 67 (FPDTD), 102 to 108 (AQAPKMA), 134 to 137 (TTTE), F141, and R144 contribute to the 4-CDP-2-C-methyl-D-erythritol 2-phosphate site.

This sequence belongs to the IspF family. As to quaternary structure, homotrimer. A divalent metal cation is required as a cofactor.

The catalysed reaction is 4-CDP-2-C-methyl-D-erythritol 2-phosphate = 2-C-methyl-D-erythritol 2,4-cyclic diphosphate + CMP. It functions in the pathway isoprenoid biosynthesis; isopentenyl diphosphate biosynthesis via DXP pathway; isopentenyl diphosphate from 1-deoxy-D-xylulose 5-phosphate: step 4/6. Its function is as follows. Involved in the biosynthesis of isopentenyl diphosphate (IPP) and dimethylallyl diphosphate (DMAPP), two major building blocks of isoprenoid compounds. Catalyzes the conversion of 4-diphosphocytidyl-2-C-methyl-D-erythritol 2-phosphate (CDP-ME2P) to 2-C-methyl-D-erythritol 2,4-cyclodiphosphate (ME-CPP) with a corresponding release of cytidine 5-monophosphate (CMP). This chain is 2-C-methyl-D-erythritol 2,4-cyclodiphosphate synthase, found in Yersinia enterocolitica serotype O:8 / biotype 1B (strain NCTC 13174 / 8081).